A 143-amino-acid chain; its full sequence is Photosystem I reaction center subunit IV A, chloroplastic (143 aa).

Residues 1–44 (MAMTTASTVFVLPANVTSVAGASSSRSSVSFLPMRNAGSRLVVR) constitute a chloroplast transit peptide. The disordered stretch occupies residues 43 to 85 (VRAAEDPAPASSSSKDSPAAAAAPDGATATKPKPPPIGPKRGS). Low complexity predominate over residues 48–73 (DPAPASSSSKDSPAAAAAPDGATATK).

It belongs to the PsaE family. In terms of processing, 2 isoforms may exist. With or without the N-terminal alanine.

Its subcellular location is the plastid. It is found in the chloroplast thylakoid membrane. Functionally, stabilizes the interaction between PsaC and the PSI core, assists the docking of the ferredoxin to PSI and interacts with ferredoxin-NADP oxidoreductase. In Arabidopsis thaliana (Mouse-ear cress), this protein is Photosystem I reaction center subunit IV A, chloroplastic (PSAE1).